The sequence spans 391 residues: Polyketide synthase 3 (391 aa).

The active site involves C164.

It belongs to the thiolase-like superfamily. Chalcone/stilbene synthases family. Homodimer.

It carries out the reaction (E)-4-coumaroyl-CoA + 3 malonyl-CoA + 3 H(+) = 2',4,4',6'-tetrahydroxychalcone + 3 CO2 + 4 CoA. The protein operates within secondary metabolite biosynthesis; flavonoid biosynthesis. In terms of biological role, polyketide synthase producing p-coumaryltriacetic acid lactone (CTAL) and slightly naringenin chalcone. Can use p-coumaryl-CoA as substrate. This is Polyketide synthase 3 (PKS3) from Rubus idaeus (Raspberry).